The sequence spans 474 residues: tRNA-2-methylthio-N(6)-dimethylallyladenosine synthase (474 aa).

One can recognise an MTTase N-terminal domain in the interval 21–138 (ERVYVETQGC…LPQMLARRRS (118 aa)). [4Fe-4S] cluster is bound by residues C30, C67, C101, C175, C179, and C182. Residues 161 to 395 (RAEGPTAYVS…ARLHEQQSAA (235 aa)) form the Radical SAM core domain. A TRAM domain is found at 397-460 (RALLGTRQSV…THSLRGRVVS (64 aa)).

Belongs to the methylthiotransferase family. MiaB subfamily. Monomer. It depends on [4Fe-4S] cluster as a cofactor.

The protein resides in the cytoplasm. The catalysed reaction is N(6)-dimethylallyladenosine(37) in tRNA + (sulfur carrier)-SH + AH2 + 2 S-adenosyl-L-methionine = 2-methylsulfanyl-N(6)-dimethylallyladenosine(37) in tRNA + (sulfur carrier)-H + 5'-deoxyadenosine + L-methionine + A + S-adenosyl-L-homocysteine + 2 H(+). Its function is as follows. Catalyzes the methylthiolation of N6-(dimethylallyl)adenosine (i(6)A), leading to the formation of 2-methylthio-N6-(dimethylallyl)adenosine (ms(2)i(6)A) at position 37 in tRNAs that read codons beginning with uridine. The polypeptide is tRNA-2-methylthio-N(6)-dimethylallyladenosine synthase (Halorhodospira halophila (strain DSM 244 / SL1) (Ectothiorhodospira halophila (strain DSM 244 / SL1))).